The sequence spans 697 residues: DNA ligase (697 aa).

Residues 34–38 (DKTYD), 83–84 (SL), and glutamate 114 each bind NAD(+). The N6-AMP-lysine intermediate role is filled by lysine 116. NAD(+)-binding residues include arginine 137, glutamate 171, lysine 315, and lysine 339. Zn(2+)-binding residues include cysteine 430, cysteine 433, cysteine 448, and cysteine 453. A BRCT domain is found at 616–697 (KKSSKLNNLN…FHNLLKEENA (82 aa)).

This sequence belongs to the NAD-dependent DNA ligase family. LigA subfamily. Mg(2+) is required as a cofactor. The cofactor is Mn(2+).

It carries out the reaction NAD(+) + (deoxyribonucleotide)n-3'-hydroxyl + 5'-phospho-(deoxyribonucleotide)m = (deoxyribonucleotide)n+m + AMP + beta-nicotinamide D-nucleotide.. Functionally, DNA ligase that catalyzes the formation of phosphodiester linkages between 5'-phosphoryl and 3'-hydroxyl groups in double-stranded DNA using NAD as a coenzyme and as the energy source for the reaction. It is essential for DNA replication and repair of damaged DNA. The sequence is that of DNA ligase from Mycoplasmopsis synoviae (strain 53) (Mycoplasma synoviae).